A 355-amino-acid chain; its full sequence is UDP-N-acetylglucosamine--N-acetylmuramyl-(pentapeptide) pyrophosphoryl-undecaprenol N-acetylglucosamine transferase (355 aa).

UDP-N-acetyl-alpha-D-glucosamine contacts are provided by residues threonine 15–glycine 17, asparagine 127, arginine 163, serine 191, isoleucine 244, alanine 263–glutamate 268, and glutamine 288.

It belongs to the glycosyltransferase 28 family. MurG subfamily.

It is found in the cell inner membrane. The catalysed reaction is di-trans,octa-cis-undecaprenyl diphospho-N-acetyl-alpha-D-muramoyl-L-alanyl-D-glutamyl-meso-2,6-diaminopimeloyl-D-alanyl-D-alanine + UDP-N-acetyl-alpha-D-glucosamine = di-trans,octa-cis-undecaprenyl diphospho-[N-acetyl-alpha-D-glucosaminyl-(1-&gt;4)]-N-acetyl-alpha-D-muramoyl-L-alanyl-D-glutamyl-meso-2,6-diaminopimeloyl-D-alanyl-D-alanine + UDP + H(+). Its pathway is cell wall biogenesis; peptidoglycan biosynthesis. Cell wall formation. Catalyzes the transfer of a GlcNAc subunit on undecaprenyl-pyrophosphoryl-MurNAc-pentapeptide (lipid intermediate I) to form undecaprenyl-pyrophosphoryl-MurNAc-(pentapeptide)GlcNAc (lipid intermediate II). This Salmonella paratyphi A (strain ATCC 9150 / SARB42) protein is UDP-N-acetylglucosamine--N-acetylmuramyl-(pentapeptide) pyrophosphoryl-undecaprenol N-acetylglucosamine transferase.